We begin with the raw amino-acid sequence, 515 residues long: NAD(P)H-quinone oxidoreductase subunit 2 (515 aa).

The next 14 helical transmembrane spans lie at 14-34 (TILP…ADLI), 42-62 (WTPY…IPLW), 79-99 (LSLF…LMSI), 109-128 (LGEF…FIAG), 132-151 (LVFI…LLTG), 167-187 (LLIG…LYGL), 206-226 (LGLV…ISAV), 240-260 (PTPV…ALAI), 274-294 (WQLI…VVAL), 302-322 (MLAY…VVGT), 330-350 (LFYL…VILF), 374-394 (LGLS…GFFG), 396-416 (IYLF…LGLL), and 462-482 (VGLV…NPLF).

Belongs to the complex I subunit 2 family. NDH-1 can be composed of about 15 different subunits; different subcomplexes with different compositions have been identified which probably have different functions.

Its subcellular location is the cellular thylakoid membrane. The enzyme catalyses a plastoquinone + NADH + (n+1) H(+)(in) = a plastoquinol + NAD(+) + n H(+)(out). The catalysed reaction is a plastoquinone + NADPH + (n+1) H(+)(in) = a plastoquinol + NADP(+) + n H(+)(out). Functionally, NDH-1 shuttles electrons from an unknown electron donor, via FMN and iron-sulfur (Fe-S) centers, to quinones in the respiratory and/or the photosynthetic chain. The immediate electron acceptor for the enzyme in this species is believed to be plastoquinone. Couples the redox reaction to proton translocation, and thus conserves the redox energy in a proton gradient. Cyanobacterial NDH-1 also plays a role in inorganic carbon-concentration. This is NAD(P)H-quinone oxidoreductase subunit 2 from Thermosynechococcus vestitus (strain NIES-2133 / IAM M-273 / BP-1).